The primary structure comprises 255 residues: 5'-nucleotidase SurE (255 aa).

D8, D9, S40, and N93 together coordinate a divalent metal cation.

It belongs to the SurE nucleotidase family. A divalent metal cation serves as cofactor.

It localises to the cytoplasm. The enzyme catalyses a ribonucleoside 5'-phosphate + H2O = a ribonucleoside + phosphate. Its function is as follows. Nucleotidase that shows phosphatase activity on nucleoside 5'-monophosphates. The sequence is that of 5'-nucleotidase SurE from Azorhizobium caulinodans (strain ATCC 43989 / DSM 5975 / JCM 20966 / LMG 6465 / NBRC 14845 / NCIMB 13405 / ORS 571).